A 1241-amino-acid polypeptide reads, in one-letter code: MIENWPKKPEGSQWTDDQWKAVVANGRDILVAAAAGSGKTAVLVERIIKKIINEENPVDVDRLLVVTFTNAAAQEMKNRIGEALEKVLIDEPGSQHVRKQLSLLNKASISTIHSFCLQVIRGYYYMLDVDPRFRIANQTENELLKEEVLDDILEEEYGIEDNTIFFELVDRYTSDRSDDDLQRMILALHTESRAHPNPEKWLDKLVEAYDVEGKTIEDLVYASYLLEDVKFQLETAEQHIRKATELAMLPDGPAPRIETLQADVALLGTLSSAARESWTSVYEAMQNVSWQTLKRIKKSDYNEDVVKQVDSLRNKAKDEVKKLQEELFSRKPESFLRDFQDMHPVLEKLVQLVKVFTERFQAMKRDKGMVDFTDLEHFCLQILSEQSENGEMNPSAVALQYRNKFAEVLVDEYQDTNFVQESIIKFVTKDSESEGNLFMVGDVKQSIYRFRLAEPGLFLGKYKRFTQEGLGGGMKIDLAKNFRSRHEVLAGTNFIFKQIMGEEVGEIDYDADAELKLGATYPEGEDVAAELLCIQQTEEEVIDGEEGAEVEKAQLEARLMAQRIKAMVDSGYEVYDRKNDSMRPVQYRDFVILLRSMPWAPQIMEELKLQGIPVYADLATGYFEATEVNIMMNVFRVIDNPMQDIPLAAVLRSPIVGLSDEELATLRAHGKKGSFYEVMSSFLKGAPLEEEQELHDKLEWFYNLLQGWREFARQQSLSDLIWKVYGETGYYDFVGGLPAGKQRQANLRVLYDRARQYEATSFRGLFRFLRFIERILERGDDMGTARALGEQEDVVRIMTIHKSKGLEFPVVFVAGLGRRFNTQDLMKRFLLHKDFGFGSQFIDPRKRIKYTTLSQLAIKRKMKMELIAEEMRVLYVALTRAKEKLILIGTVKDANKEMEKWLDAREHSEWLLPDHIRAGASCYLDWIAPSLYRHRDSEMLLELGQGSIPDEIYGYDTSWKVEVVDGNTLLAPEPVQEEKQELLEALREKKAVPLQSERKEEVYDRLMWKYGYEDATSHRAKQSVTEIKRNYQSEEGSDNAFIKKLRAPIKTRPRFMEKKGLTYAERGTAVHAVMQHVDLKKPITVEVLQEQIAGMVNKELLTFEQAEEIAIEKVISFFDSDLGKRVLAAKSVEREVPFTMMLAAEEAYQDWQGKSEETILVQGVIDCMIEEEDGITLIDFKTDTIEGKFPGGFEQAKPILEDRYKVQLSLYAKALEKSLQHPVKEKCLYFFDGNHVVNIEE.

Positions 12 to 485 (SQWTDDQWKA…IDLAKNFRSR (474 aa)) constitute a UvrD-like helicase ATP-binding domain. Residue 33-40 (AAAGSGKT) participates in ATP binding. The region spanning 505-805 (GEIDYDADAE…RIMTIHKSKG (301 aa)) is the UvrD-like helicase C-terminal domain.

This sequence belongs to the helicase family. AddA subfamily. In terms of assembly, heterodimer of AddA and AddB/RexB. It depends on Mg(2+) as a cofactor.

It carries out the reaction Couples ATP hydrolysis with the unwinding of duplex DNA by translocating in the 3'-5' direction.. The catalysed reaction is ATP + H2O = ADP + phosphate + H(+). The heterodimer acts as both an ATP-dependent DNA helicase and an ATP-dependent, dual-direction single-stranded exonuclease. Recognizes the chi site generating a DNA molecule suitable for the initiation of homologous recombination. The AddA nuclease domain is required for chi fragment generation; this subunit has the helicase and 3' -&gt; 5' nuclease activities. The protein is ATP-dependent helicase/nuclease subunit A of Bacillus cereus (strain ATCC 14579 / DSM 31 / CCUG 7414 / JCM 2152 / NBRC 15305 / NCIMB 9373 / NCTC 2599 / NRRL B-3711).